The following is a 1534-amino-acid chain: Ribosome-binding protein 1 (1534 aa).

Residues methionine 1–glutamine 7 are Lumenal-facing. Residues threonine 8–valine 28 traverse the membrane as a helical segment. At serine 29–valine 1534 the chain is on the cytoplasmic side. Disordered stretches follow at residues glutamine 45–asparagine 91 and proline 125–alanine 152. Positions threonine 52 to glutamate 63 are enriched in basic residues. The span at lysine 64–proline 88 shows a compositional bias: basic and acidic residues. Residues proline 125–serine 135 are compositionally biased toward low complexity. Lysine 148 participates in a covalent cross-link: Glycyl lysine isopeptide (Lys-Gly) (interchain with G-Cter in SUMO2). Phosphoserine occurs at positions 159 and 165. 3 disordered regions span residues alanine 173–leucine 780, lysine 968–leucine 987, and arginine 1021–asparagine 1082. Over residues lysine 175 to threonine 194 the composition is skewed to low complexity. Tandem repeats lie at residues alanine 197–glutamine 206, asparagine 207–proline 216, asparagine 217–leucine 226, asparagine 227–glutamine 236, asparagine 237–proline 246, asparagine 247–glutamine 256, asparagine 257–glutamine 266, asparagine 267–proline 276, asparagine 277–proline 286, asparagine 287–proline 296, asparagine 297–proline 306, asparagine 307–glutamine 316, asparagine 317–proline 326, asparagine 327–glutamine 336, asparagine 337–glutamine 346, asparagine 347–proline 356, asparagine 357–proline 366, asparagine 367–proline 376, asparagine 377–proline 386, asparagine 387–glutamine 396, asparagine 397–glutamine 406, asparagine 407–glutamine 416, asparagine 417–serine 426, serine 427–proline 436, asparagine 437–proline 446, asparagine 447–glutamine 456, asparagine 457–proline 466, asparagine 467–glutamine 476, asparagine 477–serine 486, asparagine 487–glutamine 496, asparagine 497–proline 506, asparagine 507–glutamine 516, asparagine 517–proline 526, asparagine 527–glutamine 536, asparagine 537–proline 546, asparagine 547–proline 556, asparagine 557–proline 566, asparagine 567–proline 576, asparagine 577–proline 586, asparagine 587–proline 596, asparagine 597–proline 606, asparagine 607–proline 616, asparagine 617–proline 626, asparagine 627–proline 636, asparagine 637–proline 646, asparagine 647–glutamine 656, asparagine 657–proline 666, asparagine 667–alanine 676, asparagine 677–alanine 686, glycine 687–proline 696, asparagine 697–proline 706, asparagine 707–proline 716, asparagine 717–alanine 726, and asparagine 727–proline 736. Positions alanine 197–proline 736 are 54 X 10 AA tandem repeats of [NASG]-[QL]-[GS]-[KRT]-[KR]-[AVTSEG]-[ED]-[AGVLS]-[ATGSV]-[PQLSA]. A Phosphothreonine modification is found at threonine 275. Residues alanine 395–glutamine 428 show a composition bias toward polar residues. A compositionally biased stretch (polar residues) spans glycine 474–glycine 499. Over residues threonine 705–glutamine 718 the composition is skewed to polar residues. Serine 715 bears the Phosphoserine mark. A Phosphoserine modification is found at serine 747. Lysine 752 is covalently cross-linked (Glycyl lysine isopeptide (Lys-Gly) (interchain with G-Cter in SUMO1)). Serine 1032 is modified (phosphoserine). Residues alanine 1059 to alanine 1080 are compositionally biased toward basic and acidic residues. Position 1064 is an N6-acetyllysine (lysine 1064). Serine 1091 and serine 1110 each carry phosphoserine. Disordered regions lie at residues glutamate 1224 to asparagine 1251, lysine 1391 to lysine 1416, and glutamate 1509 to valine 1534. Residues glutamate 1509–serine 1528 are compositionally biased toward basic and acidic residues.

The protein resides in the endoplasmic reticulum membrane. Acts as a ribosome receptor and mediates interaction between the ribosome and the endoplasmic reticulum membrane. This Canis lupus familiaris (Dog) protein is Ribosome-binding protein 1 (RRBP1).